The primary structure comprises 302 residues: MSNYLINIIGPTAIGKTSLSIKVARHFITEIISADSRQFFKEMKIGTAVPDKDELAAATHHFIQHISIADAYSVGDFEKDAILKLKELFNKHKVAVMVGGSGLYIKAITEGLDDFPKVDPEIRRNLNQHLEEDGIDWLQKKLYVLDPEYYKTADVMNPHRLIRALEICIETGKPFSSFLNQKKPERNFKNITIGLMADREMIYDRINKRVDLMIRNGLIEEARELYPQKELNALNTVGYKELFSFFDGKTDLETAISEIKKNTRRFAKRQLTWFRKDPEIKWFEFDENSKNIFDYIESKINT.

10–17 (GPTAIGKT) serves as a coordination point for ATP. Residue 12–17 (TAIGKT) participates in substrate binding. Positions 35-38 (DSRQ) are interaction with substrate tRNA.

The protein belongs to the IPP transferase family. In terms of assembly, monomer. Requires Mg(2+) as cofactor.

It carries out the reaction adenosine(37) in tRNA + dimethylallyl diphosphate = N(6)-dimethylallyladenosine(37) in tRNA + diphosphate. In terms of biological role, catalyzes the transfer of a dimethylallyl group onto the adenine at position 37 in tRNAs that read codons beginning with uridine, leading to the formation of N6-(dimethylallyl)adenosine (i(6)A). The protein is tRNA dimethylallyltransferase of Christiangramia forsetii (strain DSM 17595 / CGMCC 1.15422 / KT0803) (Gramella forsetii).